The primary structure comprises 227 residues: 7-cyano-7-deazaguanine synthase (227 aa).

10–20 (LSGGLDSCVAT) is a binding site for ATP. Residues cysteine 193, cysteine 201, cysteine 204, and cysteine 207 each contribute to the Zn(2+) site.

It belongs to the QueC family. Zn(2+) is required as a cofactor.

It catalyses the reaction 7-carboxy-7-deazaguanine + NH4(+) + ATP = 7-cyano-7-deazaguanine + ADP + phosphate + H2O + H(+). The protein operates within purine metabolism; 7-cyano-7-deazaguanine biosynthesis. Functionally, catalyzes the ATP-dependent conversion of 7-carboxy-7-deazaguanine (CDG) to 7-cyano-7-deazaguanine (preQ(0)). The chain is 7-cyano-7-deazaguanine synthase from Methanobrevibacter smithii (strain ATCC 35061 / DSM 861 / OCM 144 / PS).